A 209-amino-acid polypeptide reads, in one-letter code: Cytidylate kinase (209 aa).

7–15 (GVAASGKSS) contacts ATP.

It belongs to the cytidylate kinase family. Type 1 subfamily.

Its subcellular location is the cytoplasm. It carries out the reaction CMP + ATP = CDP + ADP. The enzyme catalyses dCMP + ATP = dCDP + ADP. The sequence is that of Cytidylate kinase from Deinococcus geothermalis (strain DSM 11300 / CIP 105573 / AG-3a).